The primary structure comprises 356 residues: Trans-enoyl reductase pgmF (356 aa).

Residues Val-57 to Lys-60, Ser-175 to Cys-178, Ser-198 to Asn-201, Tyr-216, Val-261 to Gly-262, and Ala-342 to Lys-343 contribute to the NADP(+) site.

This sequence belongs to the zinc-containing alcohol dehydrogenase family.

Functionally, FAD-linked oxidoreductase; part of the gene cluster that mediates the biosynthesis of pleosporalin A, ascomycone A, as well as a third cryptic naphthoquinone derived pigment, all responsible for the coloration of conidia. The pathway begins with the biosynthesis of the cyclized heptaketide 3-acetonyl-1,6,8-trihydroxy-2-naphthaldehyde by the NR-PKS pgmA. The C-6 hydroxyl group is further methylated by the O-methyltransferase pgmB to yield fusarubinaldehyde which is in turn oxidized by the cytochrome P450 monooxygenase pgmC at C-9. The C-1 hydroxyl group is then methylated spontaneously. Although pgmE, pgmD and pgmH are essential for the production of pleosporalin A, it is not the case for the 2 other final products and it remains difficult to assign a specific function to each enzyme. PgmF and pgmG seem not to be involved in pigment biosynthesis although they were regulated by the cluster-specific transcription factor pgmR. The sequence is that of Trans-enoyl reductase pgmF from Aspergillus terreus (strain NIH 2624 / FGSC A1156).